Here is a 90-residue protein sequence, read N- to C-terminus: RNA-binding protein Hfq (90 aa).

In terms of domain architecture, Sm spans aspartate 11–valine 71.

This sequence belongs to the Hfq family. Homohexamer.

RNA chaperone that binds small regulatory RNA (sRNAs) and mRNAs to facilitate mRNA translational regulation in response to envelope stress, environmental stress and changes in metabolite concentrations. Also binds with high specificity to tRNAs. The chain is RNA-binding protein Hfq from Maricaulis maris (strain MCS10) (Caulobacter maris).